The primary structure comprises 320 residues: Ferrochelatase (320 aa).

Histidine 194 and glutamate 275 together coordinate Fe cation.

Belongs to the ferrochelatase family. In terms of assembly, monomer.

It localises to the cytoplasm. The enzyme catalyses heme b + 2 H(+) = protoporphyrin IX + Fe(2+). Its pathway is porphyrin-containing compound metabolism; protoheme biosynthesis; protoheme from protoporphyrin-IX: step 1/1. Functionally, catalyzes the ferrous insertion into protoporphyrin IX. This Shigella dysenteriae serotype 1 (strain Sd197) protein is Ferrochelatase.